Consider the following 637-residue polypeptide: DNA gyrase subunit B (637 aa).

The region spanning 422-536 (CEVYIVEGDS…AGYVYLAMPP (115 aa)) is the Toprim domain. Glu-428, Asp-501, and Asp-503 together coordinate Mg(2+).

Belongs to the type II topoisomerase GyrB family. As to quaternary structure, heterotetramer, composed of two GyrA and two GyrB chains. In the heterotetramer, GyrA contains the active site tyrosine that forms a transient covalent intermediate with DNA, while GyrB binds cofactors and catalyzes ATP hydrolysis. It depends on Mg(2+) as a cofactor. Requires Mn(2+) as cofactor. Ca(2+) serves as cofactor.

It is found in the cytoplasm. The enzyme catalyses ATP-dependent breakage, passage and rejoining of double-stranded DNA.. Its function is as follows. A type II topoisomerase that negatively supercoils closed circular double-stranded (ds) DNA in an ATP-dependent manner to modulate DNA topology and maintain chromosomes in an underwound state. Negative supercoiling favors strand separation, and DNA replication, transcription, recombination and repair, all of which involve strand separation. Also able to catalyze the interconversion of other topological isomers of dsDNA rings, including catenanes and knotted rings. Type II topoisomerases break and join 2 DNA strands simultaneously in an ATP-dependent manner. In Treponema pallidum (strain Nichols), this protein is DNA gyrase subunit B.